The primary structure comprises 330 residues: MQPQSVLHSGYFHPLLRAWQTATTTLNASNLIYPIFVTDVPDDIQPIASLPGVARYGVNRLEEMLRPLVEEGLRCVLIFGVPSRVPKDERGSAADSEESPAIEAIHLLRKTFPNLLVACDVCLCPYTSHGHCGLLSENGAFQAEESRQRLAEVALAYAKAGCQVVAPSDMMDGRVEAIKETLMAHGLGSRVSVMSYSAKFASCFYGPFRDAAKSSPAFGDRRCYQLPPGARGLALRAVDRDVREGADMLMVKPGMPYLDIVREVKDKHPDLPLAVYHVSGEFAMLWHGAQAGAFDLKAAVLEAMTAFRRAGADIIITHYTPQLLQWLKEE.

4 residues coordinate Zn(2+): C122, C124, H131, and C132. K199 (schiff-base intermediate with substrate) is an active-site residue. At K199 the chain carries N6-succinyllysine. Residue R209 participates in 5-aminolevulinate binding. At S215 the chain carries Phosphoserine. R221 provides a ligand contact to 5-aminolevulinate. C223 contacts Zn(2+). The active-site Schiff-base intermediate with substrate is the K252. At K252 the chain carries N6-succinyllysine. S279 serves as a coordination point for 5-aminolevulinate.

The protein belongs to the ALAD family. As to quaternary structure, homooctamer; active form. Homohexamer; low activity form. The cofactor is Zn(2+).

It is found in the cytoplasm. Its subcellular location is the cytosol. It catalyses the reaction 2 5-aminolevulinate = porphobilinogen + 2 H2O + H(+). The protein operates within porphyrin-containing compound metabolism; protoporphyrin-IX biosynthesis; coproporphyrinogen-III from 5-aminolevulinate: step 1/4. Its activity is regulated as follows. Can alternate between a fully active homooctamer and a low-activity homohexamer. A bound magnesium ion may promote the assembly of the fully active homooctamer. The magnesium-binding site is absent in the low-activity homohexamer. Inhibited by compounds that favor the hexameric state. Inhibited by divalent lead ions. The lead ions partially displace the zinc cofactor. Its function is as follows. Catalyzes an early step in the biosynthesis of tetrapyrroles. Binds two molecules of 5-aminolevulinate per subunit, each at a distinct site, and catalyzes their condensation to form porphobilinogen. The protein is Delta-aminolevulinic acid dehydratase (ALAD) of Pongo abelii (Sumatran orangutan).